A 592-amino-acid chain; its full sequence is V-type ATP synthase alpha chain (592 aa).

233–240 (GPFGSGKT) provides a ligand contact to ATP.

Belongs to the ATPase alpha/beta chains family.

The enzyme catalyses ATP + H2O + 4 H(+)(in) = ADP + phosphate + 5 H(+)(out). In terms of biological role, produces ATP from ADP in the presence of a proton gradient across the membrane. The V-type alpha chain is a catalytic subunit. This is V-type ATP synthase alpha chain from Clostridium botulinum (strain Okra / Type B1).